Reading from the N-terminus, the 95-residue chain is Acylphosphatase (95 aa).

In terms of domain architecture, Acylphosphatase-like spans 10-95 (CIHATVSGKV…VEDYSDFRVR (86 aa)). Residues Arg25 and Asn43 contribute to the active site.

The protein belongs to the acylphosphatase family.

It carries out the reaction an acyl phosphate + H2O = a carboxylate + phosphate + H(+). This Coxiella burnetii (strain Dugway 5J108-111) protein is Acylphosphatase (acyP).